A 150-amino-acid chain; its full sequence is Ribonuclease K6 (150 aa).

The signal sequence occupies residues 1–23 (MVLCFPLLLLLLVLWGPVCPLHA). His-38 functions as the Proton acceptor in the catalytic mechanism. 4 disulfides stabilise this stretch: Cys-46/Cys-104, Cys-60/Cys-114, Cys-78/Cys-129, and Cys-85/Cys-92. Substrate is bound by residues 61–65 (KHQNT) and Lys-86. Residue Asn-100 is glycosylated (N-linked (GlcNAc...) asparagine). Arg-105 contributes to the substrate binding site. The active-site Proton donor is the His-145.

This sequence belongs to the pancreatic ribonuclease family. As to quaternary structure, interacts (via N-terminus) with bacterial lipopolysaccharide (LPS).

It localises to the secreted. The protein resides in the lysosome. It is found in the cytoplasmic granule. In terms of biological role, ribonuclease which shows a preference for the pyrimidines uridine and cytosine. Has potent antibacterial activity against a range of Gram-positive and Gram-negative bacteria, including P.aeruginosa, A.baumanii, M.luteus, S.aureus, E.faecalis, E.faecium, S.saprophyticus and E.coli. Causes loss of bacterial membrane integrity, and also promotes agglutination of Gram-negative bacteria. Probably contributes to urinary tract sterility. Bactericidal activity is independent of RNase activity. This Pan troglodytes (Chimpanzee) protein is Ribonuclease K6 (RNASE6).